An 803-amino-acid polypeptide reads, in one-letter code: Translation initiation factor IF-2 (803 aa).

Disordered regions lie at residues 95 to 125 (PVVE…EKAE) and 138 to 178 (EVKE…EREE). The span at 111–121 (VPLTSDTTNLN) shows a compositional bias: polar residues. Over residues 138 to 155 (EVKEEAKKTPSEKKETPK) the composition is skewed to basic and acidic residues. A compositionally biased stretch (basic residues) spans 156-167 (KGPRKETRRSRK). Residues 168–178 (PDKEDKWEREE) show a composition bias toward basic and acidic residues. Residues 302 to 471 (PRAPVVTIMG…LLQAEVLELK (170 aa)) form the tr-type G domain. Residues 311 to 318 (GHVDHGKT) are G1. 311 to 318 (GHVDHGKT) contacts GTP. The interval 336–340 (GITQH) is G2. Residues 357-360 (DTPG) form a G3 region. GTP is bound by residues 357-361 (DTPGH) and 411-414 (NKID). The segment at 411 to 414 (NKID) is G4. Residues 447–449 (SAK) form a G5 region.

The protein belongs to the TRAFAC class translation factor GTPase superfamily. Classic translation factor GTPase family. IF-2 subfamily.

Its subcellular location is the cytoplasm. Functionally, one of the essential components for the initiation of protein synthesis. Protects formylmethionyl-tRNA from spontaneous hydrolysis and promotes its binding to the 30S ribosomal subunits. Also involved in the hydrolysis of GTP during the formation of the 70S ribosomal complex. The protein is Translation initiation factor IF-2 of Coxiella burnetii (strain RSA 331 / Henzerling II).